The primary structure comprises 54 residues: Rubredoxin (54 aa).

Met1 is subject to N-formylmethionine. One can recognise a Rubredoxin-like domain in the interval 1–54 (MKKYTCTVCGYIYNPEDGDPDNGVNPGTDFKDIPDDWVCPLCGVGKDQFEEVEE). 4 residues coordinate Fe cation: Cys6, Cys9, Cys39, and Cys42.

This sequence belongs to the rubredoxin family. It depends on Fe(3+) as a cofactor.

In terms of biological role, rubredoxin is a small nonheme, iron protein lacking acid-labile sulfide. Its single Fe, chelated to 4 Cys, functions as an electron acceptor and may also stabilize the conformation of the molecule. This Clostridium pasteurianum protein is Rubredoxin.